A 322-amino-acid polypeptide reads, in one-letter code: Ras association domain-containing protein 4 (322 aa).

A disordered region spans residues 96 to 161; that stretch reads EASPQDSKVP…SKSRAPSEAQ (66 aa). Serine 142 carries the phosphoserine modification. The Ras-associating domain maps to 175 to 264; it reads YNHKTSVFTP…KIFLMEADLS (90 aa). Residues 271–318 form the SARAH domain; sequence VAQYIKFEMPVLDSFVEKLKEEEEREIIKLTMKFQALRLTMLQRLEQL.

Interacts directly with activated KRAS in a GTP-dependent manner.

Potential tumor suppressor. May act as a KRAS effector protein. May promote apoptosis and cell cycle arrest. The sequence is that of Ras association domain-containing protein 4 (Rassf4) from Mus musculus (Mouse).